The sequence spans 439 residues: F-box/FBD/LRR-repeat protein At5g56570 (439 aa).

In terms of domain architecture, F-box spans 35-81; that stretch reads PTELSDMPDDLIFKIFSFLPFFKEDLATRFISEYGKGLWNPDPNAIF. 2 LRR repeats span residues 155–177 and 223–246; these read CTTLKVLVLDHLNIMSVPGWFRL and VPTLRSLSIDNKRRGHVPLGSFWI. One can recognise an FBD domain in the interval 361 to 411; sequence VWEKPTVVPECLSTRLEILKWRDYEGTEHEKDMVGYILANATFLQRATFST.

The polypeptide is F-box/FBD/LRR-repeat protein At5g56570 (Arabidopsis thaliana (Mouse-ear cress)).